Consider the following 83-residue polypeptide: Heterin-1 (83 aa).

The signal sequence occupies residues 1 to 22; it reads MNGKLLLVSLMVTMLVMQPAEA. Residues 66–83 constitute a propeptide that is removed on maturation; that stretch reads VAGQIPFDEFMDILHYRP.

The protein belongs to the non-disulfide-bridged peptide (NDBP) superfamily. Long chain multifunctional peptide (group 2) family. Expressed by the venom gland.

It is found in the secreted. It localises to the target cell membrane. Functionally, amphipathic peptide with potent activities against both Gram-positive and Gram-negative bacteria. Is the most active against the two Gram-positive Bacillus megaterium and Micrococcus luteus (MIC=4.0 uM for both). It has relatively low hemolytic activity against human erythrocytes. This is Heterin-1 from Heterometrus spinifer (Asia giant forest scorpion).